We begin with the raw amino-acid sequence, 145 residues long: Late embryogenesis abundant protein D-11 (145 aa).

Polar residues predominate over residues 1-18 (MAHFQNQYSAPEVTQTDA). Residues 1 to 136 (MAHFQNQYSA…EAPWSPQPLI (136 aa)) are disordered. A compositionally biased stretch (basic residues) spans 47–57 (GHHHGGHHGLH). A compositionally biased stretch (low complexity) spans 58–68 (RTGSSSSSSSS). Basic and acidic residues predominate over residues 82-96 (KERLKEKIPGNKEHQ). Residues 97 to 107 (SQATSTTTPGQ) show a composition bias toward polar residues.

This sequence belongs to the plant dehydrin family.

In terms of biological role, LEA protein are late embryogenesis abundant in higher plant seed embryos. There are two subsets of LEA proteins (5a, and 5b), the first ones are expressed when the cotyledon weight reach 80 mg and the second set are expressed above 100 mg. The function of those proteins is not known. This chain is Late embryogenesis abundant protein D-11, found in Gossypium hirsutum (Upland cotton).